The sequence spans 433 residues: N-lysine methyltransferase SMYD2 (433 aa).

The SET domain maps to 7 to 241 (GGLERFCSAG…PGDEVFTSYI (235 aa)). 17–19 (KGR) lines the S-adenosyl-L-methionine pocket. Residues cysteine 52, cysteine 55, cysteine 65, cysteine 68, cysteine 74, cysteine 78, histidine 86, and cysteine 90 each coordinate Zn(2+). The MYND-type zinc finger occupies 52-90 (CECCFARKEGLSKCGRCKQAFYCDVECQKEDWPLHKLEC). Residues histidine 137, 206–207 (NH), and 258–260 (YFF) contribute to the S-adenosyl-L-methionine site. Residue serine 283 is modified to Phosphoserine.

The protein belongs to the class V-like SAM-binding methyltransferase superfamily. In terms of assembly, interacts with RNA polymerase II and HELZ. Interacts with SIN3A and HDAC1. Interacts (via MYND-type zinc finger) with EPB41L3. Interacts (via SET domain) with p53/TP53. Interacts with RB1 and HSP90AA1.

The protein localises to the cytoplasm. It localises to the cytosol. Its subcellular location is the nucleus. It carries out the reaction L-lysyl(4)-[histone H3] + 3 S-adenosyl-L-methionine = N(6),N(6),N(6)-trimethyl-L-lysyl(4)-[histone H3] + 3 S-adenosyl-L-homocysteine + 3 H(+). It catalyses the reaction L-lysyl-[protein] + S-adenosyl-L-methionine = N(6)-methyl-L-lysyl-[protein] + S-adenosyl-L-homocysteine + H(+). Its function is as follows. Protein-lysine N-methyltransferase that methylates both histones and non-histone proteins, including p53/TP53 and RB1. Specifically trimethylates histone H3 'Lys-4' (H3K4me3) in vivo. The activity requires interaction with HSP90alpha. Shows even higher methyltransferase activity on p53/TP53. Monomethylates 'Lys-370' of p53/TP53, leading to decreased DNA-binding activity and subsequent transcriptional regulation activity of p53/TP53. Monomethylates RB1 at 'Lys-860'. This is N-lysine methyltransferase SMYD2 (Smyd2) from Rattus norvegicus (Rat).